Consider the following 334-residue polypeptide: Fructose-1,6-bisphosphatase class 1 (334 aa).

Positions 90, 113, 115, and 116 each coordinate Mg(2+). Residues 116-119 (DGSS), Asn209, Tyr242, and Lys272 contribute to the substrate site. A Mg(2+)-binding site is contributed by Glu278.

It belongs to the FBPase class 1 family. In terms of assembly, homotetramer. Requires Mg(2+) as cofactor.

The protein localises to the cytoplasm. It catalyses the reaction beta-D-fructose 1,6-bisphosphate + H2O = beta-D-fructose 6-phosphate + phosphate. It participates in carbohydrate biosynthesis; gluconeogenesis. The sequence is that of Fructose-1,6-bisphosphatase class 1 from Haemophilus ducreyi (strain 35000HP / ATCC 700724).